We begin with the raw amino-acid sequence, 168 residues long: Phosphopantetheine adenylyltransferase (168 aa).

Residue threonine 14 participates in substrate binding. ATP-binding positions include 14-15 (TF) and histidine 22. Residues lysine 46, leucine 78, and arginine 92 each contribute to the substrate site. ATP-binding positions include 93–95 (GLR), glutamate 103, and 128–134 (YSFISSS).

This sequence belongs to the bacterial CoaD family. In terms of assembly, homohexamer. The cofactor is Mg(2+).

It localises to the cytoplasm. The enzyme catalyses (R)-4'-phosphopantetheine + ATP + H(+) = 3'-dephospho-CoA + diphosphate. The protein operates within cofactor biosynthesis; coenzyme A biosynthesis; CoA from (R)-pantothenate: step 4/5. In terms of biological role, reversibly transfers an adenylyl group from ATP to 4'-phosphopantetheine, yielding dephospho-CoA (dPCoA) and pyrophosphate. This Xanthomonas euvesicatoria pv. vesicatoria (strain 85-10) (Xanthomonas campestris pv. vesicatoria) protein is Phosphopantetheine adenylyltransferase.